The primary structure comprises 204 residues: MSNEEQAQKDDAQPVNEAAIDATAEQADAEVEELSAEQARILELEAALAASEATLAAQKDSVMRAIADADNVRKRAEGEVDKARKFALEKFASELLPVADNLERALQVADKENEAIKPVIEGVDITLKSFVSSIEKFGMKVIDPQGETFNPEQHQAMSMQENAELPANTVMAVMQKGYELNGRLLRPAMVMVSRAPEGGVDTQA.

Residues 1 to 12 (MSNEEQAQKDDA) show a composition bias toward basic and acidic residues. The disordered stretch occupies residues 1–32 (MSNEEQAQKDDAQPVNEAAIDATAEQADAEVE). A compositionally biased stretch (low complexity) spans 17-26 (EAAIDATAEQ).

It belongs to the GrpE family. In terms of assembly, homodimer.

It is found in the cytoplasm. Functionally, participates actively in the response to hyperosmotic and heat shock by preventing the aggregation of stress-denatured proteins, in association with DnaK and GrpE. It is the nucleotide exchange factor for DnaK and may function as a thermosensor. Unfolded proteins bind initially to DnaJ; upon interaction with the DnaJ-bound protein, DnaK hydrolyzes its bound ATP, resulting in the formation of a stable complex. GrpE releases ADP from DnaK; ATP binding to DnaK triggers the release of the substrate protein, thus completing the reaction cycle. Several rounds of ATP-dependent interactions between DnaJ, DnaK and GrpE are required for fully efficient folding. The sequence is that of Protein GrpE from Pseudoalteromonas atlantica (strain T6c / ATCC BAA-1087).